The sequence spans 430 residues: Adenylosuccinate synthetase (430 aa).

GTP-binding positions include 13-19 and 41-43; these read GDEGKGK and GHT. Residue Asp14 is the Proton acceptor of the active site. The Mg(2+) site is built by Asp14 and Gly41. IMP-binding positions include 14–17, 39–42, Thr130, Arg144, Gln225, Thr240, and Arg304; these read DEGK and NAGH. Catalysis depends on His42, which acts as the Proton donor. 300–306 contacts substrate; it reads ASTGRPR. GTP-binding positions include Arg306, 332–334, and 414–416; these read KLD and STG.

The protein belongs to the adenylosuccinate synthetase family. Homodimer. Mg(2+) serves as cofactor.

It is found in the cytoplasm. The catalysed reaction is IMP + L-aspartate + GTP = N(6)-(1,2-dicarboxyethyl)-AMP + GDP + phosphate + 2 H(+). It participates in purine metabolism; AMP biosynthesis via de novo pathway; AMP from IMP: step 1/2. Plays an important role in the de novo pathway of purine nucleotide biosynthesis. Catalyzes the first committed step in the biosynthesis of AMP from IMP. The sequence is that of Adenylosuccinate synthetase from Xylella fastidiosa (strain 9a5c).